We begin with the raw amino-acid sequence, 358 residues long: Ferredoxin--NADP reductase (358 aa).

FAD is bound by residues D38, Q46, Y51, V91, F126, D301, and T341.

Belongs to the ferredoxin--NADP reductase type 2 family. Homodimer. FAD is required as a cofactor.

The catalysed reaction is 2 reduced [2Fe-2S]-[ferredoxin] + NADP(+) + H(+) = 2 oxidized [2Fe-2S]-[ferredoxin] + NADPH. The chain is Ferredoxin--NADP reductase from Paracidovorax citrulli (strain AAC00-1) (Acidovorax citrulli).